The sequence spans 336 residues: Holliday junction branch migration complex subunit RuvB (336 aa).

The segment at 1–182 is large ATPase domain (RuvB-L); sequence MKERIVNLET…FGMSFRMQFY (182 aa). Residues leucine 21, arginine 22, glycine 63, lysine 66, threonine 67, serine 68, 129-131, arginine 172, tyrosine 182, and arginine 219 each bind ATP; that span reads EDF. Threonine 67 contributes to the Mg(2+) binding site. The small ATPAse domain (RuvB-S) stretch occupies residues 183-253; sequence NPSELALIIK…ITLHALNELG (71 aa). The tract at residues 256–336 is head domain (RuvB-H); the sequence is ELGFDEADLA…IPTLNPQTLF (81 aa). DNA is bound by residues arginine 310 and arginine 315.

This sequence belongs to the RuvB family. Homohexamer. Forms an RuvA(8)-RuvB(12)-Holliday junction (HJ) complex. HJ DNA is sandwiched between 2 RuvA tetramers; dsDNA enters through RuvA and exits via RuvB. An RuvB hexamer assembles on each DNA strand where it exits the tetramer. Each RuvB hexamer is contacted by two RuvA subunits (via domain III) on 2 adjacent RuvB subunits; this complex drives branch migration. In the full resolvosome a probable DNA-RuvA(4)-RuvB(12)-RuvC(2) complex forms which resolves the HJ.

The protein resides in the cytoplasm. The enzyme catalyses ATP + H2O = ADP + phosphate + H(+). Its function is as follows. The RuvA-RuvB-RuvC complex processes Holliday junction (HJ) DNA during genetic recombination and DNA repair, while the RuvA-RuvB complex plays an important role in the rescue of blocked DNA replication forks via replication fork reversal (RFR). RuvA specifically binds to HJ cruciform DNA, conferring on it an open structure. The RuvB hexamer acts as an ATP-dependent pump, pulling dsDNA into and through the RuvAB complex. RuvB forms 2 homohexamers on either side of HJ DNA bound by 1 or 2 RuvA tetramers; 4 subunits per hexamer contact DNA at a time. Coordinated motions by a converter formed by DNA-disengaged RuvB subunits stimulates ATP hydrolysis and nucleotide exchange. Immobilization of the converter enables RuvB to convert the ATP-contained energy into a lever motion, pulling 2 nucleotides of DNA out of the RuvA tetramer per ATP hydrolyzed, thus driving DNA branch migration. The RuvB motors rotate together with the DNA substrate, which together with the progressing nucleotide cycle form the mechanistic basis for DNA recombination by continuous HJ branch migration. Branch migration allows RuvC to scan DNA until it finds its consensus sequence, where it cleaves and resolves cruciform DNA. This Helicobacter pylori (strain ATCC 700392 / 26695) (Campylobacter pylori) protein is Holliday junction branch migration complex subunit RuvB.